Consider the following 809-residue polypeptide: BTB/POZ domain-containing protein At2g30600 (809 aa).

BTB domains are found at residues 211 to 273 (SDTV…QILE) and 351 to 420 (SDIK…NMED). The BACK domain occupies 466–537 (VVSSISSCKL…LMWCMKAEES (72 aa)).

The protein operates within protein modification; protein ubiquitination. Its function is as follows. May act as a substrate-specific adapter of an E3 ubiquitin-protein ligase complex (CUL3-RBX1-BTB) which mediates the ubiquitination and subsequent proteasomal degradation of target proteins. This chain is BTB/POZ domain-containing protein At2g30600, found in Arabidopsis thaliana (Mouse-ear cress).